The following is a 446-amino-acid chain: Argininosuccinate lyase (446 aa).

It belongs to the lyase 1 family. Argininosuccinate lyase subfamily.

Its subcellular location is the cytoplasm. The enzyme catalyses 2-(N(omega)-L-arginino)succinate = fumarate + L-arginine. It functions in the pathway amino-acid biosynthesis; L-arginine biosynthesis; L-arginine from L-ornithine and carbamoyl phosphate: step 3/3. The sequence is that of Argininosuccinate lyase from Bacteroides thetaiotaomicron (strain ATCC 29148 / DSM 2079 / JCM 5827 / CCUG 10774 / NCTC 10582 / VPI-5482 / E50).